The sequence spans 352 residues: [Citrate [pro-3S]-lyase] ligase (352 aa).

The N-acetyltransferase domain occupies 1–128 (MFGNDIFTRV…VMVLMENSAT (128 aa)).

The enzyme catalyses holo-[citrate lyase ACP] + acetate + ATP = acetyl-[citrate lyase ACP] + AMP + diphosphate. Functionally, acetylation of prosthetic group (2-(5''-phosphoribosyl)-3'-dephosphocoenzyme-A) of the gamma subunit of citrate lyase. This Escherichia coli (strain K12) protein is [Citrate [pro-3S]-lyase] ligase (citC).